We begin with the raw amino-acid sequence, 473 residues long: Photosystem II CP43 reaction center protein (473 aa).

Residues 1–14 (MKILYSQRRFYHVE) constitute a propeptide that is removed on maturation. The next 5 helical transmembrane spans lie at 69–93 (LFEV…PHLA), 134–155 (LIGP…RDKN), 178–200 (KAMF…RYIN), 255–275 (KPFG…LSYS), and 291–312 (WYNN…ASQA). [CaMn4O5] cluster is bound at residue Glu367. A helical transmembrane segment spans residues 447–471 (RARAAAAGFEKGINRENEPVLSMKL).

The protein belongs to the PsbB/PsbC family. PsbC subfamily. As to quaternary structure, PSII is composed of 1 copy each of membrane proteins PsbA, PsbB, PsbC, PsbD, PsbE, PsbF, PsbH, PsbI, PsbJ, PsbK, PsbL, PsbM, PsbT, PsbY, PsbZ, Psb30/Ycf12, at least 3 peripheral proteins of the oxygen-evolving complex and a large number of cofactors. It forms dimeric complexes. Binds multiple chlorophylls and provides some of the ligands for the Ca-4Mn-5O cluster of the oxygen-evolving complex. It may also provide a ligand for a Cl- that is required for oxygen evolution. PSII binds additional chlorophylls, carotenoids and specific lipids. is required as a cofactor.

It localises to the plastid. It is found in the chloroplast thylakoid membrane. Its function is as follows. One of the components of the core complex of photosystem II (PSII). It binds chlorophyll and helps catalyze the primary light-induced photochemical processes of PSII. PSII is a light-driven water:plastoquinone oxidoreductase, using light energy to abstract electrons from H(2)O, generating O(2) and a proton gradient subsequently used for ATP formation. This Galdieria sulphuraria (Red alga) protein is Photosystem II CP43 reaction center protein.